Reading from the N-terminus, the 518-residue chain is Delta(14)-sterol reductase erg24B (518 aa).

A glycan (N-linked (GlcNAc...) asparagine) is linked at Asn36. A run of 6 helical transmembrane segments spans residues 110 to 130 (VTMW…FLPG), 150 to 170 (AFLS…LYGT), 182 to 202 (YVQV…FVYL), 294 to 314 (IVLT…MEPA), 321 to 341 (VIMD…VPFL), and 355 to 375 (ELGL…YVIF). Residues Lys382, Arg386, Leu409, Trp414, and 421-422 (NY) each bind NADP(+). The helical transmembrane segment at 464–484 (SRGWGMIFTYFYMIYFGVLLL) threads the bilayer. NADP(+) contacts are provided by residues Asp490, 494–498 (CKRKY), and Tyr505.

This sequence belongs to the ERG4/ERG24 family.

It localises to the endoplasmic reticulum membrane. It participates in steroid metabolism; ergosterol biosynthesis. In terms of biological role, delta(14)-sterol reductase; part of the third module of ergosterol biosynthesis pathway that includes the late steps of the pathway. Catalyzes the reduction of the C14=C15 double bond within 4,4,24-trimethyl ergosta-8,14,24(28)-trienolto produce 4,4-dimethylfecosterol. The third module or late pathway involves the ergosterol synthesis itself through consecutive reactions that mainly occur in the endoplasmic reticulum (ER) membrane. Firstly, the squalene synthase erg9 catalyzes the condensation of 2 farnesyl pyrophosphate moieties to form squalene, which is the precursor of all steroids. Squalene synthase is crucial for balancing the incorporation of farnesyl diphosphate (FPP) into sterol and nonsterol isoprene synthesis. Secondly, squalene is converted into lanosterol by the consecutive action of the squalene epoxidase erg1 and the lanosterol synthase erg7. Then, the delta(24)-sterol C-methyltransferase erg6 methylates lanosterol at C-24 to produce eburicol. Eburicol is the substrate of the sterol 14-alpha demethylase encoded by cyp51A and cyp51B, to yield 4,4,24-trimethyl ergosta-8,14,24(28)-trienol. The C-14 reductase erg24 then reduces the C14=C15 double bond which leads to 4,4-dimethylfecosterol. A sequence of further demethylations at C-4, involving the C-4 demethylation complex containing the C-4 methylsterol oxidases erg25A or erg25B, the sterol-4-alpha-carboxylate 3-dehydrogenase erg26 and the 3-keto-steroid reductase erg27, leads to the production of fecosterol via 4-methylfecosterol. The C-8 sterol isomerase erg2 then catalyzes the reaction which results in unsaturation at C-7 in the B ring of sterols and thus converts fecosterol to episterol. The sterol-C5-desaturase erg3B then catalyzes the introduction of a C-5 double bond in the B ring to produce 5-dehydroepisterol. The 2 other sterol-C5-desaturases, erg3A and erg3C, seem to be less important in ergosterol biosynthesis. The C-22 sterol desaturase erg5 further converts 5-dehydroepisterol into ergosta-5,7,22,24(28)-tetraen-3beta-ol by forming the C-22(23) double bond in the sterol side chain. Finally, ergosta-5,7,22,24(28)-tetraen-3beta-ol is substrate of the C-24(28) sterol reductases erg4A and erg4B to produce ergosterol. Possible alternative sterol biosynthetic pathways might exist from fecosterol to ergosterol, depending on the activities of the erg3 isoforms. This is Delta(14)-sterol reductase erg24B from Aspergillus fumigatus (strain ATCC MYA-4609 / CBS 101355 / FGSC A1100 / Af293) (Neosartorya fumigata).